We begin with the raw amino-acid sequence, 143 residues long: Small ribosomal subunit protein bS18 (143 aa).

The disordered stretch occupies residues 1–72 (MARPDMGGPK…RGGEEGGRRG (72 aa)). The span at 10-50 (KSSGGFGGPRSGGGFGGGGYGGGGGGGGGYGGGGGGGFGGR) shows a compositional bias: gly residues. A compositionally biased stretch (basic and acidic residues) spans 51 to 70 (GGDRGDRGDRDDRGGEEGGR).

It belongs to the bacterial ribosomal protein bS18 family. As to quaternary structure, part of the 30S ribosomal subunit. Forms a tight heterodimer with protein bS6.

Binds as a heterodimer with protein bS6 to the central domain of the 16S rRNA, where it helps stabilize the platform of the 30S subunit. This is Small ribosomal subunit protein bS18 from Anaeromyxobacter sp. (strain Fw109-5).